Consider the following 741-residue polypeptide: Prestin (741 aa).

At 1 to 79 (MDHVEETEIL…WLPAYRFKEY (79 aa)) the chain is on the cytoplasmic side. A helical membrane pass occupies residues 80–105 (VLGDIVSGISTGVLQLPQGLAFAMLA). Residues 106 to 109 (AVPP) lie on the Extracellular side of the membrane. Residues 110–125 (VFGLYSSFYPVIMYCF) form a helical membrane-spanning segment. Residues 126-137 (FGTSRHISIGPF) are Cytoplasmic-facing. A helical transmembrane segment spans residues 138–147 (AVISLMIGGV). At 148 to 178 (AVRLVPDDIVIPGGVNATNSTEARDALRVKV) the chain is on the extracellular side. Positions 158–168 (IPGGVNATNST) match the Involved in motor function motif. Asn163 and Asn166 each carry an N-linked (GlcNAc...) asparagine glycan. Helical transmembrane passes span 179 to 208 (AMSV…LTEP) and 209 to 230 (LVRG…KYLF). Topologically, residues 231–243 (GVKTKRYSGIFSV) are extracellular. Positions 244-248 (VYSTV) form an intramembrane region, helical. Residues 249-261 (AVLQNVKNLNVCS) are Extracellular-facing. Residues 262–283 (LGVGLMVFGLLLGGKEFNERFK) traverse the membrane as a helical segment. At 284–291 (EKLPAPIP) the chain is on the cytoplasmic side. A helical transmembrane segment spans residues 292–303 (LEFFAVVMGTGI). At 304 to 338 (SAGFSLHESYNVDVVGTLPLGLLPPANPDTSLFHL) the chain is on the extracellular side. Residues 339 to 361 (VYVDAIAIAIVGFSVTISMAKTL) traverse the membrane as a helical segment. Residues 362 to 370 (ANKHGYQVD) lie on the Cytoplasmic side of the membrane. A helical membrane pass occupies residues 371–388 (GNQELIALGLCNSTGSLF). Residues 389–396 (QTFAISCS) are Extracellular-facing. The chain crosses the membrane as a helical span at residues 397–406 (LSRSLVQEGT). Position 398 (Ser398) interacts with salicylate. Over 407–410 (GGKT) the chain is Cytoplasmic. The helical transmembrane segment at 411–429 (QLAGCLASLMILLVILATG) threads the bilayer. The Extracellular portion of the chain corresponds to 430 to 436 (FLFESLP). A helical membrane pass occupies residues 437 to 459 (QAVLSAIVIVNLKGMFMQFSDLP). The Cytoplasmic segment spans residues 460–467 (FFWRTSKI). Residues 468 to 483 (ELTIWLTTFVSSLFLG) traverse the membrane as a helical segment. Leu484 is a topological domain (extracellular). The helical transmembrane segment at 485-498 (DYGLITAVIIALMT) threads the bilayer. The Cytoplasmic portion of the chain corresponds to 499 to 741 (VIYRTQSPSY…DSEPNATPEA (243 aa)). An extended region for STAS domain region spans residues 505-718 (SPSYIVLGQL…AVLGSQVREA (214 aa)). The 189-residue stretch at 525-713 (AYEEVKEVPG…HSIHDAVLGS (189 aa)) folds into the STAS domain. The interval 718–741 (ALAEQEATAAPPQEDSEPNATPEA) is disordered. The segment covering 721 to 730 (EQEATAAPPQ) has biased composition (low complexity).

The protein belongs to the SLC26A/SulP transporter (TC 2.A.53) family. Homodimer. Interacts (via STAS domain) with CALM; this interaction is calcium-dependent and the STAS domain interacts with only one lobe of CALM which is an elongated conformation.

It localises to the cell membrane. It catalyses the reaction 2 hydrogencarbonate(in) + chloride(out) = 2 hydrogencarbonate(out) + chloride(in). In terms of biological role, voltage-sensitive motor protein that drives outer hair cell (OHC) electromotility (eM) and participates in sound amplification in the hearing organ. Converts changes in the transmembrane electric potential into mechanical displacements resulting in the coupling of its expansion to movement of a charged voltage sensor across the lipid membrane. The nature of the voltage sensor is not completely clear, and two models compete. In the first model, acts as an incomplete transporter where intracellular chloride anion acts as extrinsic voltage sensor that drives conformational change in the protein which is sufficient to produce a length change in the plane of the membrane and hence in the length of the OHC. The second model in which multiple charged amino acid residues are distributed at the intracellular and extracellular membrane interfaces that form an intrinsic voltage sensor, whose movement produces the non-linear capacitance (NLC). However, the effective voltage sensor may be the result of a hybrid voltage sensor assembled from intrinsic charge (charged residues) and extrinsic charge (bound anion). Notably, binding of anions to the anion-binding pocket partially neutralizes the intrinsic positive charge rather than to form an electrically negative sensor, therefore remaining charge may serve as voltage sensor that, after depolarization, moves from down (expanded state) to up (contracted) conformation, which is accompanied by an eccentric contraction of the intermembrane cross-sectional area of the protein as well as a major increase in the hydrophobic thickness of the protein having as consequences the plasma membrane thickening and the cell contraction after membrane depolarization. The anion-binding pocket transits from the inward-open (Down) state, where it is exposed toward the intracellular solvent in the absence of anion, to the occluded (Up) state upon anion binding. Salicylate competes for the anion-binding site and inhibits the voltage-sensor movement, and therefore inhibits the charge transfer and electromotility by displacing Cl(-) from the anion-binding site and by preventing the structural transitions to the contracted state. In addition, can act as a weak Cl(-)/HCO3 (-) antiporter across the cell membrane and so regulate the intracellular pH of the outer hair cells (OHCs), while firstly found as being unable to mediate electrogenic anion transport. Moreover, supports a role in cardiac mechanical amplification serving as an elastic element to enhance the actomyosin- based sarcomere contraction system. In Tursiops truncatus (Atlantic bottle-nosed dolphin), this protein is Prestin.